We begin with the raw amino-acid sequence, 96 residues long: Large ribosomal subunit protein uL23 (96 aa).

It belongs to the universal ribosomal protein uL23 family. As to quaternary structure, part of the 50S ribosomal subunit. Contacts protein L29, and trigger factor when it is bound to the ribosome.

One of the early assembly proteins it binds 23S rRNA. One of the proteins that surrounds the polypeptide exit tunnel on the outside of the ribosome. Forms the main docking site for trigger factor binding to the ribosome. In Vesicomyosocius okutanii subsp. Calyptogena okutanii (strain HA), this protein is Large ribosomal subunit protein uL23.